A 265-amino-acid polypeptide reads, in one-letter code: MKAVVLTLAVLFLTGSQARHFWQQDEPQSSWDRVRDLANVYVDAVKESGREYVSQLEASALGKQLNLKLVDNWDTLGSTFQKVHEHLGPVAQEFWEKLEKETEELRREINKDLEDVRQKTQPFLDEIQKKWQEDLERYRQKVEPLSAQLREGARQKLMELQEQVTPLGEDLRDSVRAYADTLRTQLAPYSEQMRKTLGARLEAIKEGGSASLAEYHAKASEQLSALGEKAKPVLEDIHQGLMPMWESFKTGVLNVIDEAAKKLTA.

An N-terminal signal peptide occupies residues 1 to 18 (MKAVVLTLAVLFLTGSQA). Repeat copies occupy residues 67 to 88 (LKLV…EHLG) and 89 to 110 (PVAQ…REIN). The tract at residues 67 to 265 (LKLVDNWDTL…IDEAAKKLTA (199 aa)) is 10 X approximate tandem repeats. Residues 111–121 (KDLEDVRQKTQ) form a 3; half-length repeat. 5 repeat units span residues 122–143 (PFLD…QKVE), 144–165 (PLSA…EQVT), 166–187 (PLGE…TQLA), 188–209 (PYSE…EGGS), and 210–231 (ASLA…EKAK). The residue at position 193 (Met-193) is a Methionine sulfoxide. The 9; half-length repeat unit spans residues 232–242 (PVLEDIHQGLM). 2 positions are modified to methionine sulfoxide: Met-242 and Met-244. Repeat unit 10 spans residues 243–265 (PMWESFKTGVLNVIDEAAKKLTA).

This sequence belongs to the apolipoprotein A1/A4/E family. Homodimer. Interacts with APOA1BP and CLU. Component of a sperm activating protein complex (SPAP), consisting of APOA1, an immunoglobulin heavy chain, an immunoglobulin light chain and albumin. Interacts with NDRG1. Interacts with SCGB3A2. Interacts with NAXE and YJEFN3. Post-translationally, glycosylated. Palmitoylated. In terms of processing, phosphorylation sites are present in the extracellular medium. In terms of tissue distribution, major protein of plasma HDL, also found in chylomicrons.

The protein resides in the secreted. In terms of biological role, participates in the reverse transport of cholesterol from tissues to the liver for excretion by promoting cholesterol efflux from tissues and by acting as a cofactor for the lecithin cholesterol acyltransferase (LCAT). As part of the SPAP complex, activates spermatozoa motility. The polypeptide is Apolipoprotein A-I (APOA1) (Tupaia belangeri (Common tree shrew)).